The chain runs to 435 residues: Serine--tRNA ligase (435 aa).

Position 239–241 (239–241 (TAE)) interacts with L-serine. Residue 270-272 (RAE) participates in ATP binding. Glu293 contacts L-serine. 357–360 (EISS) is a binding site for ATP. Ser393 serves as a coordination point for L-serine.

It belongs to the class-II aminoacyl-tRNA synthetase family. Type-1 seryl-tRNA synthetase subfamily. As to quaternary structure, homodimer. The tRNA molecule binds across the dimer.

It is found in the cytoplasm. It carries out the reaction tRNA(Ser) + L-serine + ATP = L-seryl-tRNA(Ser) + AMP + diphosphate + H(+). The catalysed reaction is tRNA(Sec) + L-serine + ATP = L-seryl-tRNA(Sec) + AMP + diphosphate + H(+). It participates in aminoacyl-tRNA biosynthesis; selenocysteinyl-tRNA(Sec) biosynthesis; L-seryl-tRNA(Sec) from L-serine and tRNA(Sec): step 1/1. Functionally, catalyzes the attachment of serine to tRNA(Ser). Is also able to aminoacylate tRNA(Sec) with serine, to form the misacylated tRNA L-seryl-tRNA(Sec), which will be further converted into selenocysteinyl-tRNA(Sec). This Parvibaculum lavamentivorans (strain DS-1 / DSM 13023 / NCIMB 13966) protein is Serine--tRNA ligase.